A 270-amino-acid chain; its full sequence is Putative pyruvate, phosphate dikinase regulatory protein (270 aa).

151–158 contributes to the ADP binding site; that stretch reads GVSRTSKT.

It belongs to the pyruvate, phosphate/water dikinase regulatory protein family. PDRP subfamily.

The catalysed reaction is N(tele)-phospho-L-histidyl/L-threonyl-[pyruvate, phosphate dikinase] + ADP = N(tele)-phospho-L-histidyl/O-phospho-L-threonyl-[pyruvate, phosphate dikinase] + AMP + H(+). It catalyses the reaction N(tele)-phospho-L-histidyl/O-phospho-L-threonyl-[pyruvate, phosphate dikinase] + phosphate + H(+) = N(tele)-phospho-L-histidyl/L-threonyl-[pyruvate, phosphate dikinase] + diphosphate. Bifunctional serine/threonine kinase and phosphorylase involved in the regulation of the pyruvate, phosphate dikinase (PPDK) by catalyzing its phosphorylation/dephosphorylation. The protein is Putative pyruvate, phosphate dikinase regulatory protein of Lysinibacillus sphaericus (strain C3-41).